Reading from the N-terminus, the 265-residue chain is Speedy protein E13 (265 aa).

The segment at 1-80 (MGQILGKIMM…EPEKELAPEP (80 aa)) is disordered. The segment covering 66 to 80 (DESDDEPEKELAPEP) has biased composition (acidic residues).

Belongs to the Speedy/Ringo family.

This chain is Speedy protein E13, found in Homo sapiens (Human).